The sequence spans 314 residues: MTKSQRLQVAIIGSGNIGTDLMIKVMRNSKHLSMGAMVGIDAASDGLARAGRLGVPVTHEGITGLVGLPNFGDIRIAFDATSAGAHAGHNEVLQRHGVKVIDLTPAAIGPYVIPVVNLEEQLSSPNINMVTCGGQATIPIVRAVSQIARVRYAEIVASIASKSAGPGTRANIDEFTETTSAAIVSVGRAEHGKAIIVLNPAEPSLMMRDTVFCLVDADADQEAIRLSVRDMVRSVAAYVPGYRLKQDVQFDVIPDKAPVNVPGIGRVSGLKVSVFLEVEGAAHYLPAYAGNLDIMTSAALAAADKIAASLITAR.

14–17 (SGNI) lines the NAD(+) pocket. Cysteine 132 acts as the Acyl-thioester intermediate in catalysis. Residues 163–171 (SAGPGTRAN) and asparagine 291 contribute to the NAD(+) site.

This sequence belongs to the acetaldehyde dehydrogenase family.

It carries out the reaction acetaldehyde + NAD(+) + CoA = acetyl-CoA + NADH + H(+). The sequence is that of Acetaldehyde dehydrogenase from Polaromonas sp. (strain JS666 / ATCC BAA-500).